The primary structure comprises 197 residues: Imidazoleglycerol-phosphate dehydratase (197 aa).

The protein belongs to the imidazoleglycerol-phosphate dehydratase family.

The protein resides in the cytoplasm. The catalysed reaction is D-erythro-1-(imidazol-4-yl)glycerol 3-phosphate = 3-(imidazol-4-yl)-2-oxopropyl phosphate + H2O. It participates in amino-acid biosynthesis; L-histidine biosynthesis; L-histidine from 5-phospho-alpha-D-ribose 1-diphosphate: step 6/9. This Halorhodospira halophila (strain DSM 244 / SL1) (Ectothiorhodospira halophila (strain DSM 244 / SL1)) protein is Imidazoleglycerol-phosphate dehydratase.